A 474-amino-acid polypeptide reads, in one-letter code: Alginate biosynthesis protein AlgX (474 aa).

A signal peptide spans 1 to 26; it reads MKTRTSRLFRLSALAAGLCLAQAALA. The segment at 27–347 is SGNH hydrolase-like domain; that stretch reads ADPGAAPSYQ…QAMPLVDNGC (321 aa). C44 and C229 are oxidised to a cystine. The active site involves D174. H176 acts as the Proton acceptor in catalysis. S269 acts as the Nucleophile in catalysis. C347 and C460 are oxidised to a cystine. Residues 348-474 form a CBM domain region; that stretch reads SGRKTVLSRK…AKASQSVAGR (127 aa).

It belongs to the AlgX family. Monomer. Interacts with AlgK and MucD.

It is found in the periplasm. The protein operates within glycan biosynthesis; alginate biosynthesis. Functionally, plays two roles in the biosynthesis of the exopolysaccharide alginate: protects alginate from degradation as the polymer traverses the periplasm, and also plays a role in its O-acetylation. Acetylation of alginate causes the cells in the biofilm to adhere better to lung epithelium, form microcolonies, and resist the effects of the host immune system and/or antibiotics. Displays a low acetylesterase activity in vitro using a pseudosubstrate, 3-carboxyumbelliferyl acetate. Probably has acetyltransferase activity in vivo. In Pseudomonas aeruginosa (strain ATCC 15692 / DSM 22644 / CIP 104116 / JCM 14847 / LMG 12228 / 1C / PRS 101 / PAO1), this protein is Alginate biosynthesis protein AlgX (algX).